A 130-amino-acid polypeptide reads, in one-letter code: Ribosome-binding factor A (130 aa).

Belongs to the RbfA family. In terms of assembly, monomer. Binds 30S ribosomal subunits, but not 50S ribosomal subunits or 70S ribosomes.

Its subcellular location is the cytoplasm. Its function is as follows. One of several proteins that assist in the late maturation steps of the functional core of the 30S ribosomal subunit. Associates with free 30S ribosomal subunits (but not with 30S subunits that are part of 70S ribosomes or polysomes). Required for efficient processing of 16S rRNA. May interact with the 5'-terminal helix region of 16S rRNA. This is Ribosome-binding factor A from Alkalilimnicola ehrlichii (strain ATCC BAA-1101 / DSM 17681 / MLHE-1).